Here is a 626-residue protein sequence, read N- to C-terminus: Mitogen-activated protein kinase kinase kinase 3 (626 aa).

Residues Asp44–Gln123 form the PB1 domain. Disordered regions lie at residues Arg125–Glu184 and Ser218–Gly273. Composition is skewed to polar residues over residues Thr128 to Ser137, Pro144 to Tyr155, Leu165 to Arg174, and Ser219 to Arg247. A phosphoserine mark is found at Ser147 and Ser166. Residues Ser250 and Ser312 each carry the phosphoserine modification. A compositionally biased stretch (basic and acidic residues) spans Ser250 to Val270. At Ser337 the chain carries Phosphoserine; by SGK1. Ser340 bears the Phosphoserine mark. In terms of domain architecture, Protein kinase spans Trp362–Ala622. ATP is bound by residues Leu368 to Val376 and Lys391. Catalysis depends on Asp489, which acts as the Proton acceptor.

This sequence belongs to the protein kinase superfamily. STE Ser/Thr protein kinase family. MAP kinase kinase kinase subfamily. Binds both upstream activators and downstream substrates in multimolecular complexes. Part of a complex with MAP2K3, RAC1 and CCM2. Interacts with MAP2K5 and SPAG9. Requires Mg(2+) as cofactor. In terms of processing, phosphorylation at Ser-166 and Ser-337 by SGK1 inhibits its activity.

The enzyme catalyses L-seryl-[protein] + ATP = O-phospho-L-seryl-[protein] + ADP + H(+). It catalyses the reaction L-threonyl-[protein] + ATP = O-phospho-L-threonyl-[protein] + ADP + H(+). Activated by phosphorylation on Thr-530. Component of a protein kinase signal transduction cascade. Mediates activation of the NF-kappa-B, AP1 and DDIT3 transcriptional regulators. This Mus musculus (Mouse) protein is Mitogen-activated protein kinase kinase kinase 3 (Map3k3).